Consider the following 473-residue polypeptide: Glutamate--tRNA ligase 2 (473 aa).

A 'HIGH' region motif is present at residues 11-21; it reads PSPTGYLHIGG. The span at 113–133 shows a compositional bias: basic and acidic residues; the sequence is KARAEGRPPRYDGRWRDRDPS. The tract at residues 113–136 is disordered; it reads KARAEGRPPRYDGRWRDRDPSEAP. The 'KMSKS' region signature appears at 240-244; that stretch reads KLSKR. Lys243 provides a ligand contact to ATP.

The protein belongs to the class-I aminoacyl-tRNA synthetase family. Glutamate--tRNA ligase type 1 subfamily. Monomer.

The protein resides in the cytoplasm. It catalyses the reaction tRNA(Glu) + L-glutamate + ATP = L-glutamyl-tRNA(Glu) + AMP + diphosphate. Functionally, catalyzes the attachment of glutamate to tRNA(Glu) in a two-step reaction: glutamate is first activated by ATP to form Glu-AMP and then transferred to the acceptor end of tRNA(Glu). This chain is Glutamate--tRNA ligase 2, found in Brucella abortus (strain S19).